Reading from the N-terminus, the 323-residue chain is SPbeta prophage-derived uncharacterized protein YorG (323 aa).

The stretch at 222–272 forms a coiled coil; the sequence is TAENLEKAIIEAVERQEQAEGIVAVTYEEQKQNNASEELDFNSLMDQIKEI.

The sequence is that of SPbeta prophage-derived uncharacterized protein YorG (yorG) from Bacillus subtilis (strain 168).